Consider the following 553-residue polypeptide: Formate--tetrahydrofolate ligase 2 (553 aa).

Residue 63-70 participates in ATP binding; the sequence is TSAGEGKS.

This sequence belongs to the formate--tetrahydrofolate ligase family.

The catalysed reaction is (6S)-5,6,7,8-tetrahydrofolate + formate + ATP = (6R)-10-formyltetrahydrofolate + ADP + phosphate. Its pathway is one-carbon metabolism; tetrahydrofolate interconversion. In Lactobacillus acidophilus (strain ATCC 700396 / NCK56 / N2 / NCFM), this protein is Formate--tetrahydrofolate ligase 2.